Reading from the N-terminus, the 1170-residue chain is MELLRGLGVLFLLHMCGSNRIPESGGDNGVFDIFELIGGARRGPGRRLVKGQDLSSPAFRIENANLIPAVPDDKFQDLLDAVWADKGFIFLASLRQMKKTRGTLLAVERKDNTGQIFSVVSNGKAGTLDLSLSLPGKQQVVSVEEALLATGQWKSITLFVQEDRAQLYIDCDKMESAELDVPIQSIFTRDLASVARLRVAKGDVNDNFQGVLQNVRFVFGTTPEDILRNKGCSSSTNVLLTLDNNVVNGSSPAIRTNYIGHKTKDLQAICGLSCDELSSMVLELKGLRTIVTTLQDSIRKVTEENRELVSELKRPPLCFHNGVQYKNNEEWTVDSCTECHCQNSVTICKKVSCPIMPCSNATVPDGECCPRCWPSDSADDGWSPWSEWTSCSATCGNGIQQRGRSCDSLNNRCEGSSVQTRTCHIQECDKRFKQDGGWSHWSPWSSCSVTCGDGVITRIRLCNSPSPQMNGKPCEGEARETKACKKDACPINGGWGPWSPWDICSVTCGGGVQRRSRLCNNPTPQFGGKDCVGDVTENQVCNKQDCPIDGCLSNPCFAGAKCTSYPDGSWKCGACPPGYSGNGIQCKDVDECKEVPDACFNHNGEHRCKNTDPGYNCLPCPPRFTGSQPFGRGVEHAMANKQVCKPRNPCTDGTHDCNKNAKCNYLGHYSDPMYRCECKPGYAGNGIICGEDTDLDGWPNENLVCVANATYHCKKDNCPNLPNSGQEDYDKDGIGDACDDDDDNDKIPDDRDNCPFHYNPAQYDYDRDDVGDRCDNCPYNHNPDQADTDKNGEGDACAVDIDGDGILNERDNCQYVYNVDQRDTDMDGVGDQCDNCPLEHNPDQLDSDSDLIGDTCDNNQDIDEDGHQNNLDNCPYVPNANQADHDKDGKGDACDHDDDNDGIPDDRDNCRLVPNPDQKDSDGDGRGDACKDDFDHDNVPDIDDICPENFDISETDFRRFQMIPLDPKGTSQNDPNWVVRHQGKELVQTVNCDPGLAVGYDEFNAVDFSGTFFINTERDDDYAGFVFGYQSSSRFYVVMWKQVTQSYWDTNPTRAQGYSGLSVKVVNSTTGPGEHLRNALWHTGNTPGQVRTLWHDPRHIGWKDFTAYRWRLSHRPKTGYIRVVMYEGKKIMADSGPIYDKTYAGGRLGLFVFSQEMVFFSDMKYECRDS.

The N-terminal stretch at 1–18 (MELLRGLGVLFLLHMCGS) is a signal peptide. A heparin-binding region spans residues 47–95 (RLVKGQDLSSPAFRIENANLIPAVPDDKFQDLLDAVWADKGFIFLASLR). One can recognise a Laminin G-like domain in the interval 56 to 270 (SPAFRIENAN…HKTKDLQAIC (215 aa)). The cysteines at positions 171 and 232 are disulfide-linked. 2 N-linked (GlcNAc...) asparagine glycosylation sites follow: Asn-248 and Asn-360. Positions 316 to 373 (PLCFHNGVQYKNNEEWTVDSCTECHCQNSVTICKKVSCPIMPCSNATVPDGECCPRCW) constitute a VWFC domain. 3 consecutive TSP type-1 domains span residues 379–429 (DDGW…QECD), 435–490 (DGGW…DACP), and 492–547 (NGGW…QDCP). C-linked (Man) tryptophan glycosylation occurs at Trp-385. 3 disulfides stabilise this stretch: Cys-391–Cys-423, Cys-395–Cys-428, and Cys-406–Cys-413. 2 C-linked (Man) tryptophan glycosylation sites follow: Trp-438 and Trp-441. 3 cysteine pairs are disulfide-bonded: Cys-447-Cys-484, Cys-451-Cys-489, and Cys-462-Cys-474. The O-linked (Fuc...) threonine glycan is linked to Thr-450. Trp-498 is a glycosylation site (C-linked (Man) tryptophan). 21 disulfide bridges follow: Cys-504–Cys-541, Cys-508–Cys-546, Cys-519–Cys-531, Cys-551–Cys-562, Cys-556–Cys-572, Cys-575–Cys-586, Cys-592–Cys-608, Cys-599–Cys-617, Cys-620–Cys-644, Cys-650–Cys-663, Cys-657–Cys-676, Cys-678–Cys-689, Cys-705–Cys-713, Cys-718–Cys-738, Cys-754–Cys-774, Cys-777–Cys-797, Cys-813–Cys-833, Cys-836–Cys-856, Cys-874–Cys-894, Cys-910–Cys-930, and Cys-946–Cys-1167. Thr-507 is a glycosylation site (O-linked (Fuc...) threonine). The segment at 531–1152 (CVGDVTENQV…YAGGRLGLFV (622 aa)) is involved in retention in extracellular matrix (ECM); involved in trimer formation. The 41-residue stretch at 547–587 (PIDGCLSNPCFAGAKCTSYPDGSWKCGACPPGYSGNGIQCK) folds into the EGF-like 1 domain. Ser-553 carries O-linked (Xyl) serine glycosylation. The EGF-like 2 domain occupies 646–690 (PRNPCTDGTHDCNKNAKCNYLGHYSDPMYRCECKPGYAGNGIICG). 8 TSP type-3 repeats span residues 691–726 (EDTD…NSGQ), 727–762 (EDYD…NPAQ), 763–785 (YDYD…NPDQ), 786–821 (ADTD…NVDQ), 822–844 (RDTD…NPDQ), 845–882 (LDSD…NANQ), 883–918 (ADHD…NPDQ), and 919–954 (KDSD…DISE). Asn-708 is a glycosylation site (N-linked (GlcNAc...) asparagine). A disordered region spans residues 840-934 (HNPDQLDSDS…GRGDACKDDF (95 aa)). 2 stretches are compositionally biased toward basic and acidic residues: residues 883–894 (ADHDKDGKGDAC) and 917–934 (DQKD…KDDF). The short motif at 926-928 (RGD) is the Cell attachment site element. A TSP C-terminal domain is found at 958–1170 (RRFQMIPLDP…SDMKYECRDS (213 aa)). Residue Asn-1067 is glycosylated (N-linked (GlcNAc...) asparagine).

This sequence belongs to the thrombospondin family. In terms of assembly, homotrimer; disulfide-linked. Can bind to fibrinogen, fibronectin, laminin, type V collagen and integrins alpha-V/beta-1, alpha-V/beta-3 and alpha-IIb/beta-3. Binds heparin. Interacts (via the C-terminal domain) with CD47. Interacts (via the TSP type I repeats) with CD36; the interaction conveys an antiangiogenic effect. Interacts (via the TSP type I repeats) with HRG; the interaction blocks the antiangiogenic effect of THBS1 with CD36. Interacts with ATF6 (via lumenal domain). Interacts with FN1; this interaction is enhanced by TNFAIP6, which may act as a bridging molecule between FN1 and THBS1. Interacts with SIRPA; the interaction stimulates phosphorylation of SIRPA.

It is found in the secreted. The protein resides in the cell surface. Its subcellular location is the extracellular space. The protein localises to the extracellular matrix. It localises to the endoplasmic reticulum. It is found in the sarcoplasmic reticulum. In terms of biological role, adhesive glycoprotein that mediates cell-to-cell and cell-to-matrix interactions. Multifunctional, involved in inflammation, angiogenesis, wound healing, reactive oxygen species (ROS) signaling, nitrous oxide (NO) signaling, apoptosis, senescence, aging, cellular self-renewal, stemness, and cardiovascular and metabolic homeostasis. Negatively modulates dendritic cell activation and cytokine release, as part of an autocrine feedback loop, contributing to the resolution of inflammation and immune homeostasis. Ligand for receptor CD47. Modulates nitrous oxide (NO) signaling via CD47, hence playing a role as a pressor agent, supporting blood pressure. Plays a role in endothelial cell senescence, acting via CD47, by increasing the abundance and activation of NADPH oxidase NOX1, and so generating excess ROS. Inhibits stem cell self-renewal, acting via CD47 signaling, probably by regulation of the stem cell transcription factors POU5F1/OCT4, SOX2, MYC/c-Myc and KLF4. Negatively modulates wound healing, acting via CD47. Ligand for receptor CD36. Involved in inducing apoptosis in podocytes in response to elevated free fatty acids, acting via CD36. Plays a role in suppressing angiogenesis, acting, depending on context, via CD36 or CD47. Promotes cellular senescence in a TP53-CDKN1A-RB1 signaling-dependent manner. Ligand for immunoglobulin-like cell surface receptor SIRPA. Involved in ROS signaling in non-phagocytic cells, stimulating NADPH oxidase-derived ROS production, acting via interaction with SIRPA. Plays a role in metabolic dysfunction in diet-induced obesity, perhaps acting by exacerbating adipose inflammatory activity; its effects may be mediated, at least in part, through enhanced adipocyte proliferation. Plays a role in ER stress response, via its interaction with the activating transcription factor 6 alpha (ATF6) which produces adaptive ER stress response factors. May be involved in age-related conditions, including metabolic dysregulation, during normal aging. This chain is Thrombospondin-1 (Thbs1), found in Mus musculus (Mouse).